Here is a 561-residue protein sequence, read N- to C-terminus: Proline--tRNA ligase (561 aa).

It belongs to the class-II aminoacyl-tRNA synthetase family. ProS type 1 subfamily. Homodimer.

The protein localises to the cytoplasm. The enzyme catalyses tRNA(Pro) + L-proline + ATP = L-prolyl-tRNA(Pro) + AMP + diphosphate. In terms of biological role, catalyzes the attachment of proline to tRNA(Pro) in a two-step reaction: proline is first activated by ATP to form Pro-AMP and then transferred to the acceptor end of tRNA(Pro). As ProRS can inadvertently accommodate and process non-cognate amino acids such as alanine and cysteine, to avoid such errors it has two additional distinct editing activities against alanine. One activity is designated as 'pretransfer' editing and involves the tRNA(Pro)-independent hydrolysis of activated Ala-AMP. The other activity is designated 'posttransfer' editing and involves deacylation of mischarged Ala-tRNA(Pro). The misacylated Cys-tRNA(Pro) is not edited by ProRS. This chain is Proline--tRNA ligase, found in Wigglesworthia glossinidia brevipalpis.